The sequence spans 386 residues: Succinate--CoA ligase [ADP-forming] subunit beta (386 aa).

Residues 9 to 244 enclose the ATP-grasp domain; that stretch reads KAVLRSYGVS…LDEEDAKEIE (236 aa). ATP-binding positions include Lys46, 53–55, Glu99, Cys102, and Glu107; that span reads GRG. Residues Asn199 and Asp213 each contribute to the Mg(2+) site. Residues Asn264 and 321–323 contribute to the substrate site; that span reads GIM.

Belongs to the succinate/malate CoA ligase beta subunit family. Heterotetramer of two alpha and two beta subunits. Mg(2+) is required as a cofactor.

The enzyme catalyses succinate + ATP + CoA = succinyl-CoA + ADP + phosphate. It carries out the reaction GTP + succinate + CoA = succinyl-CoA + GDP + phosphate. Its pathway is carbohydrate metabolism; tricarboxylic acid cycle; succinate from succinyl-CoA (ligase route): step 1/1. Succinyl-CoA synthetase functions in the citric acid cycle (TCA), coupling the hydrolysis of succinyl-CoA to the synthesis of either ATP or GTP and thus represents the only step of substrate-level phosphorylation in the TCA. The beta subunit provides nucleotide specificity of the enzyme and binds the substrate succinate, while the binding sites for coenzyme A and phosphate are found in the alpha subunit. This Bacillus anthracis (strain A0248) protein is Succinate--CoA ligase [ADP-forming] subunit beta.